The sequence spans 551 residues: Trigger factor (551 aa).

In terms of domain architecture, PPIase FKBP-type spans 165–250 (GDLVVLDFAG…ATDVRVPGET (86 aa)). Positions 442-551 (ADDDTIGKGH…APAKKKAAAE (110 aa)) are disordered. The segment covering 458–472 (GHDHHDHDHDHDHAA) has biased composition (basic and acidic residues). A compositionally biased stretch (low complexity) spans 513-541 (EAAPAPKKAPAKKAAAAKAEEAPAAAPKK). The segment covering 542–551 (APAKKKAAAE) has biased composition (basic residues).

This sequence belongs to the FKBP-type PPIase family. Tig subfamily.

It localises to the cytoplasm. The catalysed reaction is [protein]-peptidylproline (omega=180) = [protein]-peptidylproline (omega=0). Its function is as follows. Involved in protein export. Acts as a chaperone by maintaining the newly synthesized protein in an open conformation. Functions as a peptidyl-prolyl cis-trans isomerase. The protein is Trigger factor of Rhizorhabdus wittichii (strain DSM 6014 / CCUG 31198 / JCM 15750 / NBRC 105917 / EY 4224 / RW1) (Sphingomonas wittichii).